The sequence spans 246 residues: Complement C1q tumor necrosis factor-related protein 3 (246 aa).

Residues 1-22 (MLWRQLIYWQLLALFFLPFCLC) form the signal peptide. Residues 51 to 113 (GYQGPPGPPG…KGEKGYPGIP (63 aa)) enclose the Collagen-like domain. The disordered stretch occupies residues 53-110 (QGPPGPPGPPGIPGNHGNNGNNGATGHEGAKGEKGDKGDLGPRGERGQHGPKGEKGYP). A compositionally biased stretch (pro residues) spans 55-64 (PPGPPGPPGI). The span at 65–74 (PGNHGNNGNN) shows a compositional bias: low complexity. The N-linked (GlcNAc...) asparagine glycan is linked to asparagine 70. Residues 80–107 (EGAKGEKGDKGDLGPRGERGQHGPKGEK) are compositionally biased toward basic and acidic residues. The 134-residue stretch at 113–246 (PPELQIAFMA…FAGFLLFETK (134 aa)) folds into the C1q domain.

In terms of processing, glycosylated on Asn-70. In terms of tissue distribution, expressed in colon and small intestine.

Its subcellular location is the secreted. The chain is Complement C1q tumor necrosis factor-related protein 3 (C1QTNF3) from Homo sapiens (Human).